The following is a 780-amino-acid chain: Molybdenum cofactor sulfurase (780 aa).

Residue Lys246 is modified to N6-(pyridoxal phosphate)lysine. The active site involves Cys413. The 146-residue stretch at 635–780 folds into the MOSC domain; it reads LRLLRQSGQR…MTCGDVVLVE (146 aa). Residue Ser734 is modified to Phosphoserine.

The protein belongs to the class-V pyridoxal-phosphate-dependent aminotransferase family. MOCOS subfamily. The cofactor is pyridoxal 5'-phosphate.

The enzyme catalyses Mo-molybdopterin + L-cysteine + AH2 = thio-Mo-molybdopterin + L-alanine + A + H2O. In terms of biological role, sulfurates the molybdenum cofactor. Sulfation of molybdenum is essential for xanthine dehydrogenase (XDH) and aldehyde oxidase (ADO) enzymes in which molybdenum cofactor is liganded by 1 oxygen and 1 sulfur atom in active form. The chain is Molybdenum cofactor sulfurase from Drosophila yakuba (Fruit fly).